A 254-amino-acid chain; its full sequence is tRNA (guanine-N(7)-)-methyltransferase (254 aa).

Residues 1–34 (MNTNTPAHPPEGAPLSEATQAALASAEHAPDSPG) form a disordered region. Glu87, Glu112, Asp139, and Asp162 together coordinate S-adenosyl-L-methionine. Asp162 is an active-site residue. Residues Lys166, Asp198, and 233–236 (TKFE) contribute to the substrate site.

Belongs to the class I-like SAM-binding methyltransferase superfamily. TrmB family.

It carries out the reaction guanosine(46) in tRNA + S-adenosyl-L-methionine = N(7)-methylguanosine(46) in tRNA + S-adenosyl-L-homocysteine. The protein operates within tRNA modification; N(7)-methylguanine-tRNA biosynthesis. Its function is as follows. Catalyzes the formation of N(7)-methylguanine at position 46 (m7G46) in tRNA. The sequence is that of tRNA (guanine-N(7)-)-methyltransferase from Bordetella bronchiseptica (strain ATCC BAA-588 / NCTC 13252 / RB50) (Alcaligenes bronchisepticus).